The following is a 476-amino-acid chain: Mitochondrial-processing peptidase subunit beta (476 aa).

Residues 1–28 (MASRRLALNLAQGVKARAGGVINPFRRG) constitute a mitochondrion transit peptide. A Zn(2+)-binding site is contributed by His84. Glu87 acts as the Proton acceptor in catalysis. His88 and Glu164 together coordinate Zn(2+).

The protein belongs to the peptidase M16 family. Heterodimer of mpp (alpha) and pep (beta) subunits, forming the mitochondrial processing protease (MPP) in which mpp is involved in substrate recognition and binding and pep is the catalytic subunit. Component of the ubiquinol-cytochrome c oxidoreductase (cytochrome b-c1 complex, complex III, CIII), a multisubunit enzyme composed of 10 subunits. The complex is composed of 3 respiratory subunits cytochrome b (cob), cytochrome c1 (cyt-1) and Rieske protein (fes-1), 2 core protein subunits pep and ucr-1, and 5 low-molecular weight protein subunits qcr6, qcr7, qcr8, qcr9 and probably NCU16844/qcr10. The complex exists as an obligatory dimer and forms supercomplexes (SCs) in the inner mitochondrial membrane with NADH-ubiquinone oxidoreductase (complex I, CI) and cytochrome c oxidase (complex IV, CIV), resulting in different assemblies (supercomplexes SCI(1)III(2), SCIII(2)IV(1) and SCIII(2)IV(2) as well as higher order I(x)III(y)IV(z) megacomplexes). Requires Zn(2+) as cofactor.

It is found in the mitochondrion matrix. Its subcellular location is the mitochondrion inner membrane. The catalysed reaction is Release of N-terminal transit peptides from precursor proteins imported into the mitochondrion, typically with Arg in position P2.. Its activity is regulated as follows. Binding to mpp is required for catalytic activity. Inhibited by metal chelator ethylenediaminetetraacetic acid (EDTA). Functionally, catalytic subunit of the essential mitochondrial processing protease (MPP), which cleaves the mitochondrial sequence off newly imported precursors proteins. Preferentially, cleaves after an arginine at position P2. Component of the ubiquinol-cytochrome c oxidoreductase, a multisubunit transmembrane complex that is part of the mitochondrial electron transport chain which drives oxidative phosphorylation. The respiratory chain contains 3 multisubunit complexes succinate dehydrogenase (complex II, CII), ubiquinol-cytochrome c oxidoreductase (cytochrome b-c1 complex, complex III, CIII) and cytochrome c oxidase (complex IV, CIV), that cooperate to transfer electrons derived from NADH and succinate to molecular oxygen, creating an electrochemical gradient over the inner membrane that drives transmembrane transport and the ATP synthase. The cytochrome b-c1 complex catalyzes electron transfer from ubiquinol to cytochrome c, linking this redox reaction to translocation of protons across the mitochondrial inner membrane, with protons being carried across the membrane as hydrogens on the quinol. In the process called Q cycle, 2 protons are consumed from the matrix, 4 protons are released into the intermembrane space and 2 electrons are passed to cytochrome c. This Neurospora crassa (strain ATCC 24698 / 74-OR23-1A / CBS 708.71 / DSM 1257 / FGSC 987) protein is Mitochondrial-processing peptidase subunit beta.